The following is a 213-amino-acid chain: Adenylate kinase (213 aa).

10-15 (GAGKGT) is a binding site for ATP. The NMP stretch occupies residues 30-59 (STGDMLRAAVAAGSEVGLRAKAAMESGSLV). Residues Thr-31, Arg-36, 57–59 (SLV), 85–88 (GFPR), and Gln-92 each bind AMP. The LID stretch occupies residues 126 to 163 (GRSSCEKCGEGYHDSFKPSAQPNVCDKCSGTLKRRADD). Arg-127 is an ATP binding site. 4 residues coordinate Zn(2+): Cys-130, Cys-133, Cys-150, and Cys-153. Residues Arg-160 and Arg-171 each contribute to the AMP site. Gln-199 is a binding site for ATP.

The protein belongs to the adenylate kinase family. In terms of assembly, monomer.

It is found in the cytoplasm. It catalyses the reaction AMP + ATP = 2 ADP. It participates in purine metabolism; AMP biosynthesis via salvage pathway; AMP from ADP: step 1/1. Catalyzes the reversible transfer of the terminal phosphate group between ATP and AMP. Plays an important role in cellular energy homeostasis and in adenine nucleotide metabolism. The protein is Adenylate kinase of Magnetococcus marinus (strain ATCC BAA-1437 / JCM 17883 / MC-1).